We begin with the raw amino-acid sequence, 161 residues long: Cyclic pyranopterin monophosphate synthase (161 aa).

Substrate contacts are provided by residues 75 to 77 and 113 to 114; these read LCH and ME. Aspartate 128 is an active-site residue.

The protein belongs to the MoaC family. As to quaternary structure, homohexamer; trimer of dimers.

The catalysed reaction is (8S)-3',8-cyclo-7,8-dihydroguanosine 5'-triphosphate = cyclic pyranopterin phosphate + diphosphate. It participates in cofactor biosynthesis; molybdopterin biosynthesis. Functionally, catalyzes the conversion of (8S)-3',8-cyclo-7,8-dihydroguanosine 5'-triphosphate to cyclic pyranopterin monophosphate (cPMP). This is Cyclic pyranopterin monophosphate synthase from Cupriavidus pinatubonensis (strain JMP 134 / LMG 1197) (Cupriavidus necator (strain JMP 134)).